A 440-amino-acid chain; its full sequence is Glutamate-1-semialdehyde 2,1-aminomutase (440 aa).

Lys-273 is subject to N6-(pyridoxal phosphate)lysine.

Belongs to the class-III pyridoxal-phosphate-dependent aminotransferase family. HemL subfamily. In terms of assembly, homodimer. It depends on pyridoxal 5'-phosphate as a cofactor.

It localises to the cytoplasm. The catalysed reaction is (S)-4-amino-5-oxopentanoate = 5-aminolevulinate. Its pathway is porphyrin-containing compound metabolism; protoporphyrin-IX biosynthesis; 5-aminolevulinate from L-glutamyl-tRNA(Glu): step 2/2. The protein is Glutamate-1-semialdehyde 2,1-aminomutase of Alkaliphilus metalliredigens (strain QYMF).